A 224-amino-acid chain; its full sequence is Uridylate kinase (224 aa).

9 to 10 (GS) is an ATP binding site. Gly-43 contributes to the UMP binding site. Positions 44 and 48 each coordinate ATP. UMP-binding positions include Asp-65 and 113 to 119 (TEPAHST). The ATP site is built by Thr-139, Tyr-145, and Asp-148.

This sequence belongs to the UMP kinase family. Homohexamer.

Its subcellular location is the cytoplasm. The enzyme catalyses UMP + ATP = UDP + ADP. It participates in pyrimidine metabolism; CTP biosynthesis via de novo pathway; UDP from UMP (UMPK route): step 1/1. Inhibited by UTP. Functionally, catalyzes the reversible phosphorylation of UMP to UDP. In Methanothermobacter thermautotrophicus (strain ATCC 29096 / DSM 1053 / JCM 10044 / NBRC 100330 / Delta H) (Methanobacterium thermoautotrophicum), this protein is Uridylate kinase.